Consider the following 397-residue polypeptide: NADH-quinone oxidoreductase subunit H (397 aa).

Transmembrane regions (helical) follow at residues 7 to 27 (ALLI…TAFA), 78 to 98 (LVYT…FGGI), 120 to 140 (ILAL…GGWA), 164 to 184 (MGLS…LDIV), 195 to 215 (WLIL…FAEV), 247 to 267 (MAEY…FFGG), 283 to 303 (SWPL…FIWV), 322 to 342 (LTLP…AFVP), and 353 to 373 (WLLG…SDAV).

Belongs to the complex I subunit 1 family. NDH-1 is composed of 15 different subunits. Subunits NuoA, H, J, K, L, M, N constitute the membrane sector of the complex.

It localises to the cell membrane. The catalysed reaction is a quinone + NADH + 5 H(+)(in) = a quinol + NAD(+) + 4 H(+)(out). Functionally, NDH-1 shuttles electrons from NADH, via FMN and iron-sulfur (Fe-S) centers, to quinones in the respiratory chain. The immediate electron acceptor for the enzyme in this species is believed to be ubiquinone. Couples the redox reaction to proton translocation (for every two electrons transferred, four hydrogen ions are translocated across the cytoplasmic membrane), and thus conserves the redox energy in a proton gradient. This subunit may bind ubiquinone. The protein is NADH-quinone oxidoreductase subunit H of Deinococcus radiodurans (strain ATCC 13939 / DSM 20539 / JCM 16871 / CCUG 27074 / LMG 4051 / NBRC 15346 / NCIMB 9279 / VKM B-1422 / R1).